The primary structure comprises 40 residues: Chitin-binding protein 4 (40 aa).

N-glycosylated.

Its function is as follows. Chitin-binding protein. Has antifungal activity against C.krusei, C.albicans, C.tropicalis and C.parapsilosis. Has antinociceptive and anti-inflammatory activity in mice. This Moringa oleifera (Horseradish tree) protein is Chitin-binding protein 4.